A 201-amino-acid chain; its full sequence is FMN-dependent NADH:quinone oxidoreductase (201 aa).

Residues Ser10, Ser16–Ser18, Met96–Phe99, and Ser140–Gly143 each bind FMN.

The protein belongs to the azoreductase type 1 family. Homodimer. FMN serves as cofactor.

It carries out the reaction 2 a quinone + NADH + H(+) = 2 a 1,4-benzosemiquinone + NAD(+). The catalysed reaction is N,N-dimethyl-1,4-phenylenediamine + anthranilate + 2 NAD(+) = 2-(4-dimethylaminophenyl)diazenylbenzoate + 2 NADH + 2 H(+). Its function is as follows. Quinone reductase that provides resistance to thiol-specific stress caused by electrophilic quinones. In terms of biological role, also exhibits azoreductase activity. Catalyzes the reductive cleavage of the azo bond in aromatic azo compounds to the corresponding amines. This is FMN-dependent NADH:quinone oxidoreductase from Shigella boydii serotype 4 (strain Sb227).